Consider the following 483-residue polypeptide: Cobyric acid synthase (483 aa).

Residues 252-430 (ALQVVAVAYP…LHRLFDSGPF (179 aa)) enclose the GATase cobBQ-type domain. Cysteine 333 functions as the Nucleophile in the catalytic mechanism. Residue histidine 422 is part of the active site.

The protein belongs to the CobB/CobQ family. CobQ subfamily.

It functions in the pathway cofactor biosynthesis; adenosylcobalamin biosynthesis. In terms of biological role, catalyzes amidations at positions B, D, E, and G on adenosylcobyrinic A,C-diamide. NH(2) groups are provided by glutamine, and one molecule of ATP is hydrogenolyzed for each amidation. This is Cobyric acid synthase from Halorhodospira halophila (strain DSM 244 / SL1) (Ectothiorhodospira halophila (strain DSM 244 / SL1)).